Reading from the N-terminus, the 208-residue chain is High frequency lysogenization protein HflD homolog (208 aa).

It belongs to the HflD family.

Its subcellular location is the cytoplasm. It localises to the cell inner membrane. This is High frequency lysogenization protein HflD homolog from Yersinia pestis bv. Antiqua (strain Nepal516).